Consider the following 244-residue polypeptide: High frequency lysogenization protein HflD homolog (244 aa).

This sequence belongs to the HflD family.

The protein localises to the cytoplasm. The protein resides in the cell inner membrane. This Acinetobacter baumannii (strain ATCC 17978 / DSM 105126 / CIP 53.77 / LMG 1025 / NCDC KC755 / 5377) protein is High frequency lysogenization protein HflD homolog.